We begin with the raw amino-acid sequence, 576 residues long: MSFEIPRKQYAQLYGPTTGDSIRLADTELFLEIEKDYTVYGEEVVFGGGKVIRDGMGQNGQLTRAEDIPDTVITNVIVLDYTGIYKADIALKDGHIFKIGKAGNPQITDGVDIVIGASTEIIAGERKILTAGGIDTHIHFISPEQVPAALCNGITTMVGGGTGPAEGTKATTITPGAWHISRMLQAAEGLPVNIGLFGKGHASAVEPLAEQIRAGAVGLKVHEDWGSTTSSIDMSLRVADEYDVQIAIHTDTLNECGFVEDTIRAIDGRVIHTFHTEGAGGGHAPDIIKIAGLPNVLPASTNPTLPYTRNTIEEHLDMLMVCHHLNPDIPEDVAFADSRIRAETIAAEDVLHDLGIFAITSSDSQAMGRVGEVVTRTWQVADAMKRQRGALHDPSGAPHGSAESDNFRLKRYIAKYTINAAIAQGMADVIGSVEEGKFADLVLWDPAFFGVKPELVIKGGQIAYALMGDANASIPTPQPRTMRPMFATYGKALQQTSITFLSQAAIDAGVPAELGLQRIIKPVSGIRNLTKADLKYNGETPDIAVDPETYKVTVDGVEVTSQPSDVLPMAQRYFLF.

One can recognise a Urease domain in the interval 132 to 576 (GGIDTHIHFI…LPMAQRYFLF (445 aa)). Ni(2+)-binding residues include histidine 137, histidine 139, and lysine 220. Lysine 220 is subject to N6-carboxylysine. Histidine 222 is a substrate binding site. Residues histidine 249 and histidine 275 each contribute to the Ni(2+) site. Histidine 323 acts as the Proton donor in catalysis. Position 363 (aspartate 363) interacts with Ni(2+).

The protein belongs to the metallo-dependent hydrolases superfamily. Urease alpha subunit family. As to quaternary structure, heterotrimer of UreA (gamma), UreB (beta) and UreC (alpha) subunits. Three heterotrimers associate to form the active enzyme. Ni cation is required as a cofactor. In terms of processing, carboxylation allows a single lysine to coordinate two nickel ions.

It is found in the cytoplasm. It catalyses the reaction urea + 2 H2O + H(+) = hydrogencarbonate + 2 NH4(+). It participates in nitrogen metabolism; urea degradation; CO(2) and NH(3) from urea (urease route): step 1/1. This chain is Urease subunit alpha, found in Paenarthrobacter aurescens (strain TC1).